We begin with the raw amino-acid sequence, 772 residues long: U3 small nucleolar RNA-associated protein 25 homolog (772 aa).

Residues 1–179 (MGKRRNRGRS…SEEFTDVKHE (179 aa)) are disordered. 2 promotes p53/TP53 degradation regions span residues 1–201 (MGKR…SQRP) and 589–651 (VQLP…KKEE). Ser-10 carries the post-translational modification Phosphoserine. A compositionally biased stretch (basic and acidic residues) spans 25 to 43 (RDFGEEHPFYDRVSKKEAK). Phosphoserine occurs at positions 52, 60, and 64. The span at 54-70 (DSSHSESESESEQEHVS) shows a compositional bias: basic and acidic residues. The span at 84-124 (EEEEEEEEEEEEEEEEEEEEEEEEEDDSAVGDAEMNEEAGS) shows a compositional bias: acidic residues. Low complexity predominate over residues 127–136 (GSVGEAAVSE). The segment covering 169 to 179 (SSEEFTDVKHE) has biased composition (basic and acidic residues). Residues 652 to 713 (LNFTHICEYT…YELPTYPHFY (62 aa)) form a represses p53/TP53 degradation region.

This sequence belongs to the UTP25 family. Interacts with CAPN3; the interaction is required for CAPN3 translocation to the nucleolus. Phosphorylated. Phosphorylation is required to promote p53/TP53 degradation in the nucleolus which promotes cell cycle progression and liver development. As to expression, expressed in all tissues tested: brain, small intestine, large intestine, stomach, liver, spleen, thymus, lung, kidney and testes (at protein level).

It is found in the nucleus. Its subcellular location is the nucleolus. Functionally, component of the ribosomal small subunit processome for the biogenesis of ribosomes, functions in pre-ribosomal RNA (pre-rRNA) processing. Essential for embryonic development in part through the regulation of p53 pathway. Controls the expansion growth of digestive organs and liver. Also involved in the sympathetic neuronal development. Mediates, with CAPN3, the proteasome-independent degradation of p53/TP53. The sequence is that of U3 small nucleolar RNA-associated protein 25 homolog from Mus musculus (Mouse).